We begin with the raw amino-acid sequence, 214 residues long: Ribosomal RNA small subunit methyltransferase G (214 aa).

Residues Gly77, Phe82, 128 to 129 (VE), and Arg143 each bind S-adenosyl-L-methionine.

It belongs to the methyltransferase superfamily. RNA methyltransferase RsmG family.

Its subcellular location is the cytoplasm. It carries out the reaction guanosine(527) in 16S rRNA + S-adenosyl-L-methionine = N(7)-methylguanosine(527) in 16S rRNA + S-adenosyl-L-homocysteine. Specifically methylates the N7 position of guanine in position 527 of 16S rRNA. In Nitrosomonas europaea (strain ATCC 19718 / CIP 103999 / KCTC 2705 / NBRC 14298), this protein is Ribosomal RNA small subunit methyltransferase G.